Here is a 423-residue protein sequence, read N- to C-terminus: UDP-N-acetylglucosamine 1-carboxyvinyltransferase (423 aa).

22-23 (KN) lines the phosphoenolpyruvate pocket. Arginine 98 is a binding site for UDP-N-acetyl-alpha-D-glucosamine. The active-site Proton donor is the cysteine 122. Cysteine 122 bears the 2-(S-cysteinyl)pyruvic acid O-phosphothioketal mark. UDP-N-acetyl-alpha-D-glucosamine-binding positions include 127-131 (RPVDQ), aspartate 311, and isoleucine 333.

Belongs to the EPSP synthase family. MurA subfamily.

It is found in the cytoplasm. It catalyses the reaction phosphoenolpyruvate + UDP-N-acetyl-alpha-D-glucosamine = UDP-N-acetyl-3-O-(1-carboxyvinyl)-alpha-D-glucosamine + phosphate. The protein operates within cell wall biogenesis; peptidoglycan biosynthesis. Functionally, cell wall formation. Adds enolpyruvyl to UDP-N-acetylglucosamine. The sequence is that of UDP-N-acetylglucosamine 1-carboxyvinyltransferase from Stenotrophomonas maltophilia (strain R551-3).